The sequence spans 487 residues: Glutamyl-tRNA(Gln) amidotransferase subunit A (487 aa).

Residues Lys-79 and Ser-154 each act as charge relay system in the active site. Ser-178 acts as the Acyl-ester intermediate in catalysis.

The protein belongs to the amidase family. GatA subfamily. Heterotrimer of A, B and C subunits.

It catalyses the reaction L-glutamyl-tRNA(Gln) + L-glutamine + ATP + H2O = L-glutaminyl-tRNA(Gln) + L-glutamate + ADP + phosphate + H(+). Allows the formation of correctly charged Gln-tRNA(Gln) through the transamidation of misacylated Glu-tRNA(Gln) in organisms which lack glutaminyl-tRNA synthetase. The reaction takes place in the presence of glutamine and ATP through an activated gamma-phospho-Glu-tRNA(Gln). The polypeptide is Glutamyl-tRNA(Gln) amidotransferase subunit A (Moorella thermoacetica (strain ATCC 39073 / JCM 9320)).